The primary structure comprises 197 residues: Cell division protein SepF (197 aa).

A disordered region spans residues D15–V91. Over residues P22–Q31 the composition is skewed to basic and acidic residues. Over residues T37–Q47 the composition is skewed to low complexity. Polar residues-rich tracts occupy residues S48–L58 and R78–V91.

Belongs to the SepF family. As to quaternary structure, homodimer. Interacts with FtsZ.

Its subcellular location is the cytoplasm. Its function is as follows. Cell division protein that is part of the divisome complex and is recruited early to the Z-ring. Probably stimulates Z-ring formation, perhaps through the cross-linking of FtsZ protofilaments. Its function overlaps with FtsA. The chain is Cell division protein SepF from Staphylococcus haemolyticus (strain JCSC1435).